A 484-amino-acid polypeptide reads, in one-letter code: MVMPTVVSDRMGTIDFIDYTNNHVFSKCQTDSLNTVNNGSLKHDDYLHGLANGKLVAKQMIGDALRQRVESIDSEFCEPGDEDTFFVADLGEVYRQHLRWKLNLPRVKPFYAVKCHPDERLLQLLAALGTGFDCASKAEIEQVLRMGVDPSRIIYAQPCKTNSYLRYVAQQGVRQMTFDNADELRKIARLYPDAELFLRILTDDSSSLCRFSMKFGASLDSTDGLLGLARQLGLNVVGVSFHVGSGASDPTAFLKAVQDAHVVFQQAAAYGYSLKTLDVGGGFCSDDSFEQMANVLRAALDEYFPAHTGVNLIAEPGRYYASSAFTLACNIIARRTIQDGSAVSVSDSSSMSDDGSVNNGDARYMVYVNDGLYGNFSSIMFDHQHPVAKILRAGGRTMYNSVAAHESSAEDAIEYSIWGPTCDGIDRITESIRFREILDVGDWLYFEDMGAYTKCSATTFNGFSNEHDVIYVCSEPGAMALLGL.

Lys114 bears the N6-(pyridoxal phosphate)lysine mark. Pyridoxal 5'-phosphate-binding positions include Ser245, Gly282, and 315–318 (EPGR). 381–382 (FD) is a binding site for substrate. The Proton donor; shared with dimeric partner role is filled by Cys422. Position 423 (Asp423) interacts with substrate. Tyr452 lines the pyridoxal 5'-phosphate pocket.

The protein belongs to the Orn/Lys/Arg decarboxylase class-II family. In terms of assembly, homodimer. Only the dimer is catalytically active, as the active sites are constructed of residues from both monomers. Requires pyridoxal 5'-phosphate as cofactor.

Its subcellular location is the cytoplasm. The catalysed reaction is L-ornithine + H(+) = putrescine + CO2. It functions in the pathway amine and polyamine biosynthesis; putrescine biosynthesis via L-ornithine pathway; putrescine from L-ornithine: step 1/1. Its activity is regulated as follows. Inhibited by antizyme (AZ) OAZ1 in response to polyamine levels. AZ inhibits the assembly of the functional homodimer by binding to ODC monomers and targeting them for ubiquitin-independent proteolytic destruction by the 26S proteasome. Catalyzes the first and rate-limiting step of polyamine biosynthesis that converts ornithine into putrescine, which is the precursor for the polyamines, spermidine and spermine. Polyamines are essential for cell proliferation and are implicated in cellular processes, ranging from DNA replication to apoptosis. The protein is Ornithine decarboxylase (spe-1) of Neurospora crassa (strain ATCC 24698 / 74-OR23-1A / CBS 708.71 / DSM 1257 / FGSC 987).